We begin with the raw amino-acid sequence, 156 residues long: Small ribosomal subunit protein uS7 (156 aa).

This sequence belongs to the universal ribosomal protein uS7 family. In terms of assembly, part of the 30S ribosomal subunit. Contacts proteins S9 and S11.

One of the primary rRNA binding proteins, it binds directly to 16S rRNA where it nucleates assembly of the head domain of the 30S subunit. Is located at the subunit interface close to the decoding center, probably blocks exit of the E-site tRNA. The protein is Small ribosomal subunit protein uS7 of Shewanella sp. (strain W3-18-1).